A 193-amino-acid chain; its full sequence is Imidazoleglycerol-phosphate dehydratase (193 aa).

It belongs to the imidazoleglycerol-phosphate dehydratase family.

Its subcellular location is the cytoplasm. It carries out the reaction D-erythro-1-(imidazol-4-yl)glycerol 3-phosphate = 3-(imidazol-4-yl)-2-oxopropyl phosphate + H2O. It functions in the pathway amino-acid biosynthesis; L-histidine biosynthesis; L-histidine from 5-phospho-alpha-D-ribose 1-diphosphate: step 6/9. The protein is Imidazoleglycerol-phosphate dehydratase of Sulfolobus acidocaldarius (strain ATCC 33909 / DSM 639 / JCM 8929 / NBRC 15157 / NCIMB 11770).